Reading from the N-terminus, the 293-residue chain is Small ribosomal subunit protein uS2 (293 aa).

Positions 239–293 are disordered; that stretch reads PAGGADWEAAPAGFPAAATGEWSEAQPATWESGAAAATGPSTEWADSAPKDTAGW. The segment covering 247-256 has biased composition (low complexity); the sequence is AAPAGFPAAA.

It belongs to the universal ribosomal protein uS2 family. As to quaternary structure, component of the small ribosomal subunit. Mature ribosomes consist of a small (40S) and a large (60S) subunit. The 40S subunit contains about 33 different proteins and 1 molecule of RNA (18S). The 60S subunit contains about 49 different proteins and 3 molecules of RNA (25S, 5.8S and 5S). Interacts with RPS21.

Its subcellular location is the cytoplasm. In terms of biological role, required for the assembly and/or stability of the 40S ribosomal subunit. Required for the processing of the 20S rRNA-precursor to mature 18S rRNA in a late step of the maturation of 40S ribosomal subunits. In Chaetomium globosum (strain ATCC 6205 / CBS 148.51 / DSM 1962 / NBRC 6347 / NRRL 1970) (Soil fungus), this protein is Small ribosomal subunit protein uS2.